Here is a 1006-residue protein sequence, read N- to C-terminus: Phosphatidylinositol 4,5-bisphosphate 5-phosphatase A (1006 aa).

The disordered stretch occupies residues 1 to 416 (MEGQSSRGSR…SSSPWSAQPT (416 aa)). Polar residues predominate over residues 27 to 41 (VAQTGAPSKVDSSFQ). Position 56 is an asymmetric dimethylarginine; alternate (arginine 56). Arginine 56 is modified (omega-N-methylarginine; alternate). Residue arginine 65 is modified to Omega-N-methylarginine. Position 76 is an asymmetric dimethylarginine (arginine 76). At arginine 83 the chain carries Asymmetric dimethylarginine; alternate. Arginine 83 is modified (omega-N-methylarginine; alternate). Residues 94–112 (GQKTATAHRSSSLAPTSVG) show a composition bias toward polar residues. Positions 102–107 (RSSSLA) match the RSXSXX motif 1 motif. The span at 180–193 (LAASGLSLALASEE) shows a compositional bias: low complexity. The span at 196–209 (PELPSTPSPVPSPV) shows a compositional bias: pro residues. The span at 210–234 (LSPTQEQALAPASTASGAASVGQTS) shows a compositional bias: low complexity. Over residues 256-273 (PAQTSGPTGSPPCIQTSP) the composition is skewed to polar residues. 2 positions are modified to phosphoserine: serine 291 and serine 324. Residues 337–347 (VPPPLPKPPRS) are compositionally biased toward pro residues. Residues 345-350 (PRSPSR) carry the SH3-binding motif. Composition is skewed to low complexity over residues 348 to 360 (PSRS…NRSP) and 398 to 409 (TTSSSTSTLSSS). Residues 350–355 (RSPSHS) carry the RSXSXX motif 2 motif. The interval 425–728 (ITVVTWNVGT…SDHKPVAAQF (304 aa)) is catalytic. Residues 729–840 (LLQFAFRDDM…IGITEPFQIS (112 aa)) are required for ruffle localization. Low complexity predominate over residues 844 to 858 (SELASSSTDSSGTSS). Positions 844 to 1006 (SELASSSTDS…RGLEEGGLGP (163 aa)) are disordered. 2 consecutive short sequence motifs (RSXSXX motif) follow at residues 874 to 879 (RSPSPG) and 885 to 890 (RSRSPG). Serine 903 bears the Phosphoserine mark. The short motif at 911 to 916 (RSPSPQ) is the RSXSXX motif 5 element. Low complexity predominate over residues 927–946 (RSSNGSSRGSSEEGPSGLPG). Residue serine 990 is modified to Phosphoserine.

The protein belongs to the inositol 1,4,5-trisphosphate 5-phosphatase type II family.

It localises to the cytoplasm. The catalysed reaction is 1D-myo-inositol 1,4,5-trisphosphate + H2O = 1D-myo-inositol 1,4-bisphosphate + phosphate. The enzyme catalyses 1D-myo-inositol 1,3,4,5-tetrakisphosphate + H2O = 1D-myo-inositol 1,3,4-trisphosphate + phosphate. It carries out the reaction a 1,2-diacyl-sn-glycero-3-phospho-(1D-myo-inositol-4,5-bisphosphate) + H2O = a 1,2-diacyl-sn-glycero-3-phospho-(1D-myo-inositol 4-phosphate) + phosphate. In terms of biological role, inositol 5-phosphatase, which converts inositol 1,4,5-trisphosphate to inositol 1,4-bisphosphate. Also converts phosphatidylinositol 4,5-bisphosphate to phosphatidylinositol 4-phosphate and inositol 1,3,4,5-tetrakisphosphate to inositol 1,3,4-trisphosphate in vitro. May be involved in modulation of the function of inositol and phosphatidylinositol polyphosphate-binding proteins that are present at membranes ruffles. This is Phosphatidylinositol 4,5-bisphosphate 5-phosphatase A (INPP5J) from Homo sapiens (Human).